The following is a 284-amino-acid chain: Phosphatidylglycerol--prolipoprotein diacylglyceryl transferase (284 aa).

A run of 7 helical transmembrane segments spans residues 14 to 34 (IAFS…ACAI), 62 to 82 (YFLW…ILIY), 106 to 126 (FVGI…IASY), 136 to 156 (LLIY…FGRI), 190 to 210 (PSQL…VMWA), 218 to 238 (GLLI…AEFY), and 252 to 272 (LSMG…ILLY). Arg-155 lines the a 1,2-diacyl-sn-glycero-3-phospho-(1'-sn-glycerol) pocket.

It belongs to the Lgt family.

It is found in the cell inner membrane. It carries out the reaction L-cysteinyl-[prolipoprotein] + a 1,2-diacyl-sn-glycero-3-phospho-(1'-sn-glycerol) = an S-1,2-diacyl-sn-glyceryl-L-cysteinyl-[prolipoprotein] + sn-glycerol 1-phosphate + H(+). The protein operates within protein modification; lipoprotein biosynthesis (diacylglyceryl transfer). Catalyzes the transfer of the diacylglyceryl group from phosphatidylglycerol to the sulfhydryl group of the N-terminal cysteine of a prolipoprotein, the first step in the formation of mature lipoproteins. This Helicobacter pylori (strain ATCC 700392 / 26695) (Campylobacter pylori) protein is Phosphatidylglycerol--prolipoprotein diacylglyceryl transferase.